Here is a 338-residue protein sequence, read N- to C-terminus: Holliday junction branch migration complex subunit RuvB (338 aa).

Residues 4-187 (ADRLIHAEPQ…FGIPLRLEFY (184 aa)) form a large ATPase domain (RuvB-L) region. Residues Arg-27, Gly-68, Lys-71, Thr-72, Thr-73, 134–136 (EDY), Arg-177, Tyr-187, and Arg-224 each bind ATP. Thr-72 contributes to the Mg(2+) binding site. Positions 188–258 (NVKDLSSIVT…VAELALDMLD (71 aa)) are small ATPAse domain (RuvB-S). The head domain (RuvB-H) stretch occupies residues 261–338 (SEGFDYMDRK…RHFDIIQPEK (78 aa)). The DNA site is built by Arg-297, Arg-316, and Arg-321.

It belongs to the RuvB family. Homohexamer. Forms an RuvA(8)-RuvB(12)-Holliday junction (HJ) complex. HJ DNA is sandwiched between 2 RuvA tetramers; dsDNA enters through RuvA and exits via RuvB. An RuvB hexamer assembles on each DNA strand where it exits the tetramer. Each RuvB hexamer is contacted by two RuvA subunits (via domain III) on 2 adjacent RuvB subunits; this complex drives branch migration. In the full resolvosome a probable DNA-RuvA(4)-RuvB(12)-RuvC(2) complex forms which resolves the HJ.

It localises to the cytoplasm. It carries out the reaction ATP + H2O = ADP + phosphate + H(+). Functionally, the RuvA-RuvB-RuvC complex processes Holliday junction (HJ) DNA during genetic recombination and DNA repair, while the RuvA-RuvB complex plays an important role in the rescue of blocked DNA replication forks via replication fork reversal (RFR). RuvA specifically binds to HJ cruciform DNA, conferring on it an open structure. The RuvB hexamer acts as an ATP-dependent pump, pulling dsDNA into and through the RuvAB complex. RuvB forms 2 homohexamers on either side of HJ DNA bound by 1 or 2 RuvA tetramers; 4 subunits per hexamer contact DNA at a time. Coordinated motions by a converter formed by DNA-disengaged RuvB subunits stimulates ATP hydrolysis and nucleotide exchange. Immobilization of the converter enables RuvB to convert the ATP-contained energy into a lever motion, pulling 2 nucleotides of DNA out of the RuvA tetramer per ATP hydrolyzed, thus driving DNA branch migration. The RuvB motors rotate together with the DNA substrate, which together with the progressing nucleotide cycle form the mechanistic basis for DNA recombination by continuous HJ branch migration. Branch migration allows RuvC to scan DNA until it finds its consensus sequence, where it cleaves and resolves cruciform DNA. The sequence is that of Holliday junction branch migration complex subunit RuvB from Shewanella woodyi (strain ATCC 51908 / MS32).